Here is a 665-residue protein sequence, read N- to C-terminus: non-specific serine/threonine protein kinase (665 aa).

Residues 145–597 (FDVHCRIGSG…AEEALKHPFF (453 aa)) enclose the Protein kinase domain. ATP-binding positions include 151–159 (IGSGTFSTV) and lysine 181. Aspartate 268 acts as the Proton acceptor in catalysis.

It belongs to the protein kinase superfamily. Ser/Thr protein kinase family. As to quaternary structure, interacts with chif (via N-terminus).

The catalysed reaction is L-seryl-[protein] + ATP = O-phospho-L-seryl-[protein] + ADP + H(+). It carries out the reaction L-threonyl-[protein] + ATP = O-phospho-L-threonyl-[protein] + ADP + H(+). Probable serine/threonine protein kinase that forms a complex with the N-terminal peptide of the chiffon protein and may be involved in regulating meiotic processes in the male testis. The chain is non-specific serine/threonine protein kinase from Drosophila melanogaster (Fruit fly).